The following is a 115-amino-acid chain: Large ribosomal subunit protein uL24 (115 aa).

The protein belongs to the universal ribosomal protein uL24 family. In terms of assembly, part of the 50S ribosomal subunit.

Functionally, one of two assembly initiator proteins, it binds directly to the 5'-end of the 23S rRNA, where it nucleates assembly of the 50S subunit. Its function is as follows. One of the proteins that surrounds the polypeptide exit tunnel on the outside of the subunit. The sequence is that of Large ribosomal subunit protein uL24 from Synechocystis sp. (strain ATCC 27184 / PCC 6803 / Kazusa).